Consider the following 71-residue polypeptide: MSRPQKLAIGLIKGYQVAISPFFPSTCRFYPTCSEYAVQAIGKYGLMRGGLRAVRRVLRCHPFSPGGYDPA.

Belongs to the UPF0161 family.

The protein localises to the cell membrane. Could be involved in insertion of integral membrane proteins into the membrane. The chain is Putative membrane protein insertion efficiency factor from Desulforudis audaxviator (strain MP104C).